Here is a 1142-residue protein sequence, read N- to C-terminus: Probable serine/threonine-protein kinase fhkB (1142 aa).

Positions 1 to 16 (MSQDIQTQNSYSDELY) are enriched in polar residues. Disordered stretches follow at residues 1-359 (MSQD…RLSQ), 374-404 (NTHTNQLGQSSQQTNSPNVHFNSLQQKKKQQ), and 432-451 (QIIGSQSSQSSQLPPTQPPV). Low complexity-rich tracts occupy residues 17–72 (SSQI…FSQN) and 83–157 (QNSY…PSSQ). Residues 158–178 (KRFFQSQNDDFVPSSQVTSLQ) show a composition bias toward polar residues. Positions 186–302 (IQQQQQQQQQ…DYEQENDDDD (117 aa)) form a coiled coil. Residues 187–260 (QQQQQQQQQQ…QQTQQQQQQP (74 aa)) show a composition bias toward low complexity. Acidic residues-rich tracts occupy residues 261-277 (QEDDDDYDDYDGYDNYE) and 283-325 (EGEE…EEES). Low complexity predominate over residues 333-348 (RALQSRSSQSRPLLRS). Residues 374 to 397 (NTHTNQLGQSSQQTNSPNVHFNSL) are compositionally biased toward polar residues. The stretch at 393 to 434 (HFNSLQQKKKQQQQQQQQQQQQQQQQQQQQQQQQQQQSQQII) forms a coiled coil. Residues 432–443 (QIIGSQSSQSSQ) are compositionally biased toward low complexity. In terms of domain architecture, FHA spans 480-551 (IVVGRSSSCD…NGSYINGELI (72 aa)). A Protein kinase domain is found at 625-885 (YYFVKEIGSG…IKEALNHPWF (261 aa)). ATP contacts are provided by residues 631–639 (IGSGGYGIV) and Lys654. Asp747 functions as the Proton acceptor in the catalytic mechanism. Positions 947–1142 (FDNNNNNNNN…HQQYTQHTTM (196 aa)) are disordered. Low complexity predominate over residues 949–1034 (NNNNNNNNNN…HNHNLNNHNH (86 aa)). The span at 1035 to 1067 (NNNHHHNHNHNHNHNHNHNHNHNHNHNHNHNHN) shows a compositional bias: basic residues. Residues 1068 to 1133 (NHNNNNNNNN…NNINNNNNYH (66 aa)) are compositionally biased toward low complexity. Residues 1090-1132 (NNNNNNNNNNNNNNNNNNNNYYNNNINNINNNINNNINNNNNY) adopt a coiled-coil conformation.

It belongs to the protein kinase superfamily. CAMK Ser/Thr protein kinase family. CHK2 subfamily.

It carries out the reaction L-seryl-[protein] + ATP = O-phospho-L-seryl-[protein] + ADP + H(+). The catalysed reaction is L-threonyl-[protein] + ATP = O-phospho-L-threonyl-[protein] + ADP + H(+). This chain is Probable serine/threonine-protein kinase fhkB (fhkB), found in Dictyostelium discoideum (Social amoeba).